The following is a 214-amino-acid chain: ATP phosphoribosyltransferase (214 aa).

It belongs to the ATP phosphoribosyltransferase family. Short subfamily. In terms of assembly, heteromultimer composed of HisG and HisZ subunits.

It is found in the cytoplasm. The enzyme catalyses 1-(5-phospho-beta-D-ribosyl)-ATP + diphosphate = 5-phospho-alpha-D-ribose 1-diphosphate + ATP. It participates in amino-acid biosynthesis; L-histidine biosynthesis; L-histidine from 5-phospho-alpha-D-ribose 1-diphosphate: step 1/9. Catalyzes the condensation of ATP and 5-phosphoribose 1-diphosphate to form N'-(5'-phosphoribosyl)-ATP (PR-ATP). Has a crucial role in the pathway because the rate of histidine biosynthesis seems to be controlled primarily by regulation of HisG enzymatic activity. In Methylibium petroleiphilum (strain ATCC BAA-1232 / LMG 22953 / PM1), this protein is ATP phosphoribosyltransferase.